The chain runs to 152 residues: Transcriptional repressor NrdR (152 aa).

A zinc finger lies at 3 to 34 (CPFCNHGELKVIDSRNSPEANAIKRRRECLRC). Residues 48 to 138 (IQVLKRDGRY…VYRRFRDVGE (91 aa)) form the ATP-cone domain.

This sequence belongs to the NrdR family. It depends on Zn(2+) as a cofactor.

In terms of biological role, negatively regulates transcription of bacterial ribonucleotide reductase nrd genes and operons by binding to NrdR-boxes. In Chlamydia muridarum (strain MoPn / Nigg), this protein is Transcriptional repressor NrdR.